Consider the following 332-residue polypeptide: DNA-directed RNA polymerase subunit alpha (332 aa).

The alpha N-terminal domain (alpha-NTD) stretch occupies residues 1 to 232; it reads MQVSNFLKPR…DQLTAFVELE (232 aa). An alpha C-terminal domain (alpha-CTD) region spans residues 246–332; sequence IDPVLLQPID…LREEETKVTA (87 aa).

Belongs to the RNA polymerase alpha chain family. In terms of assembly, homodimer. The RNAP catalytic core consists of 2 alpha, 1 beta, 1 beta' and 1 omega subunit. When a sigma factor is associated with the core the holoenzyme is formed, which can initiate transcription.

The catalysed reaction is RNA(n) + a ribonucleoside 5'-triphosphate = RNA(n+1) + diphosphate. Its function is as follows. DNA-dependent RNA polymerase catalyzes the transcription of DNA into RNA using the four ribonucleoside triphosphates as substrates. This Nitrosococcus oceani (strain ATCC 19707 / BCRC 17464 / JCM 30415 / NCIMB 11848 / C-107) protein is DNA-directed RNA polymerase subunit alpha.